The following is a 77-amino-acid chain: Large ribosomal subunit protein bL31 (77 aa).

It belongs to the bacterial ribosomal protein bL31 family. Type A subfamily. As to quaternary structure, part of the 50S ribosomal subunit.

In terms of biological role, binds the 23S rRNA. In Synechococcus elongatus (strain ATCC 33912 / PCC 7942 / FACHB-805) (Anacystis nidulans R2), this protein is Large ribosomal subunit protein bL31.